Consider the following 59-residue polypeptide: Large ribosomal subunit protein bL32 (59 aa).

The segment at 1-20 (MAVPRNRHSNARKNIRRSHH) is disordered.

Belongs to the bacterial ribosomal protein bL32 family.

This chain is Large ribosomal subunit protein bL32, found in Chlamydia trachomatis serovar A (strain ATCC VR-571B / DSM 19440 / HAR-13).